A 452-amino-acid chain; its full sequence is Probable ECA polymerase (452 aa).

A run of 11 helical transmembrane segments spans residues 6–26 (FSGLLVVWLLSTLFIATLTWF), 37–57 (VFFSLLFLLTFFFGFPLTSVL), 63–83 (VGVAPPEILLQALLSAACFYG), 118–138 (VILMGIALVSVAIFFMHNGFL), 155–175 (GVALKRFFYFFIPAMLVVYFL), 181–201 (AWLFFLVSTVAFGLLTYMIVG), 207–227 (IIIAFAIFLFIGIIRGWISLW), 228–248 (MLAAAGVLGIVGMFWLALKRY), 341–361 (LVVMGGALFIPLGAIVVGLII), 378–398 (YKAAILHSFCFGAIFNMIVLA), and 410–430 (VFFLVVFGASLLVAKLLFWLF).

Belongs to the WzyE family. As to quaternary structure, probably part of a complex composed of WzxE, WzyE and WzzE.

Its subcellular location is the cell inner membrane. It participates in bacterial outer membrane biogenesis; enterobacterial common antigen biosynthesis. Its function is as follows. Probably involved in the polymerization of enterobacterial common antigen (ECA) trisaccharide repeat units. The sequence is that of Probable ECA polymerase from Salmonella choleraesuis (strain SC-B67).